The primary structure comprises 1140 residues: Protein shank (1140 aa).

6 ANK repeats span residues 144-174 (QGETPLTLAAGIPNNRAVIVSLIGGGAHVDF), 178-207 (EGQTAMHKAAFLSSFENVKTLIELGASPNY), 211-242 (IGLTPLYYNMLTADSNDQVAEILLREAADIGV), 246-275 (HGNHEIHQACKNGLTKHVEHLLYFGGQIDA), 279-309 (NGNSPLHVCAVNNRPECARVLLFRGADHLAV), and 312-341 (QGQTALHVSHIVGNPGVADVVQAHNPKSSV). The segment at 337-412 (PKSSVPYRGT…ITPSEYGTMR (76 aa)) is disordered. Over residues 351–364 (TRRRLSSTITRRRS) the composition is skewed to basic residues. Positions 388–412 (SAAPSPSPSRSSRTTITPSEYGTMR) are enriched in low complexity. The 94-residue stretch at 436–529 (ILVIPRGVKG…TITLKVITVD (94 aa)) folds into the PDZ domain. Polar residues-rich tracts occupy residues 640–657 (DQESLNGGYSSKKYNSVS) and 687–704 (TSTFEYNCSSRSTPQLSR). Disordered regions lie at residues 640-673 (DQESLNGGYSSKKYNSVSDMKRRKGQRNVVASSA), 687-856 (TSTF…AASA), 875-902 (QLKKAEPRETSAASVSNNNNNNNNSTTD), 961-993 (KDSGYTSSRTSLEPSESEEKDHRPHFSLDHSPN), and 1008-1028 (YGQKDNMSVASSSTASSSSTV). 2 stretches are compositionally biased toward low complexity: residues 761-775 (QHQNHQNHQYQQQHP) and 784-793 (PQPIQQQQSS). Pro residues-rich tracts occupy residues 794 to 806 (IPPPPPPPPPPHC) and 823 to 847 (VPPPPPPLPPISSGAPPPPPPPPPG). The span at 964-974 (GYTSSRTSLEP) shows a compositional bias: polar residues. Over residues 977 to 988 (SEEKDHRPHFSL) the composition is skewed to basic and acidic residues. The segment covering 1015–1028 (SVASSSTASSSSTV) has biased composition (low complexity). The region spanning 1078-1140 (WSVDDVIGWL…IESALRGLLQ (63 aa)) is the SAM domain.

This sequence belongs to the SHANK family. Interacts (via PDZ domain) with egl-19 (via C-terminus). As to expression, expressed in the pharynx, pharyngeal-intestinal valve, intestine, rectal epithelial cells, tail neurons, nerve cord and sperm.

The protein resides in the cell projection. The protein localises to the pseudopodium. It is found in the cytoplasmic vesicle. Its subcellular location is the postsynaptic density. Scaffold protein that most likely acts in the postsynaptic density (PSD) of excitatory synapses which orchestrates synapse formation and maintenance at neuromuscular junctions. Associates with and trafficks the L-type calcium channel egl-19 to the cell surface of body wall muscles to ensure the function of the calcium channel and therefore maintain the Ca(2+) current density. The maintenance of Ca(2+) also allows for the downstream regulation of Ca(2+)-induced expression of genes such as gem-4. Plays a role in the regulation of the defecation cycle, and this may be in association with the inositol trisphosphate (IP3) receptor itr-1, which in turn mediates periodic calcium release and muscle contractions. Required for normal fertility and pharyngeal pumping. In Caenorhabditis elegans, this protein is Protein shank.